The sequence spans 132 residues: Small ribosomal subunit protein uS8 (132 aa).

The protein belongs to the universal ribosomal protein uS8 family. As to quaternary structure, part of the 30S ribosomal subunit. Contacts proteins S5 and S12.

Functionally, one of the primary rRNA binding proteins, it binds directly to 16S rRNA central domain where it helps coordinate assembly of the platform of the 30S subunit. This Francisella tularensis subsp. novicida (strain U112) protein is Small ribosomal subunit protein uS8.